Here is a 766-residue protein sequence, read N- to C-terminus: LPS-assembly protein LptD (766 aa).

The first 18 residues, 1–18 (MQIRYFLALSLLPNIVLA), serve as a signal peptide directing secretion.

It belongs to the LptD family. Component of the lipopolysaccharide transport and assembly complex. Interacts with LptE and LptA.

It localises to the cell outer membrane. Together with LptE, is involved in the assembly of lipopolysaccharide (LPS) at the surface of the outer membrane. The chain is LPS-assembly protein LptD from Shewanella frigidimarina (strain NCIMB 400).